A 229-amino-acid chain; its full sequence is Cytochrome c oxidase subunit 2 (229 aa).

The Mitochondrial intermembrane segment spans residues 1–14 (MANPSQFGFQDASS). Residues 15-45 (PIMEELVEFHDHALMVALAICSLVLYLLALM) traverse the membrane as a helical segment. Residues 46-58 (LVEKLSSNTVDAQ) lie on the Mitochondrial matrix side of the membrane. A helical membrane pass occupies residues 59–86 (EVELIWTILPAIVLILLALPSLQILYMM). At 87–229 (DEIDEPDLTL…SWSSLLSTDS (143 aa)) the chain is on the mitochondrial intermembrane side. Residues His160, Cys195, Glu197, Cys199, His203, and Met206 each contribute to the Cu cation site. Glu197 provides a ligand contact to Mg(2+).

Belongs to the cytochrome c oxidase subunit 2 family. In terms of assembly, component of the cytochrome c oxidase (complex IV, CIV), a multisubunit enzyme composed of 14 subunits. The complex is composed of a catalytic core of 3 subunits MT-CO1, MT-CO2 and MT-CO3, encoded in the mitochondrial DNA, and 11 supernumerary subunits COX4I, COX5A, COX5B, COX6A, COX6B, COX6C, COX7A, COX7B, COX7C, COX8 and NDUFA4, which are encoded in the nuclear genome. The complex exists as a monomer or a dimer and forms supercomplexes (SCs) in the inner mitochondrial membrane with NADH-ubiquinone oxidoreductase (complex I, CI) and ubiquinol-cytochrome c oxidoreductase (cytochrome b-c1 complex, complex III, CIII), resulting in different assemblies (supercomplex SCI(1)III(2)IV(1) and megacomplex MCI(2)III(2)IV(2)). Found in a complex with TMEM177, COA6, COX18, COX20, SCO1 and SCO2. Interacts with TMEM177 in a COX20-dependent manner. Interacts with COX20. Interacts with COX16. It depends on Cu cation as a cofactor.

The protein localises to the mitochondrion inner membrane. The enzyme catalyses 4 Fe(II)-[cytochrome c] + O2 + 8 H(+)(in) = 4 Fe(III)-[cytochrome c] + 2 H2O + 4 H(+)(out). Its function is as follows. Component of the cytochrome c oxidase, the last enzyme in the mitochondrial electron transport chain which drives oxidative phosphorylation. The respiratory chain contains 3 multisubunit complexes succinate dehydrogenase (complex II, CII), ubiquinol-cytochrome c oxidoreductase (cytochrome b-c1 complex, complex III, CIII) and cytochrome c oxidase (complex IV, CIV), that cooperate to transfer electrons derived from NADH and succinate to molecular oxygen, creating an electrochemical gradient over the inner membrane that drives transmembrane transport and the ATP synthase. Cytochrome c oxidase is the component of the respiratory chain that catalyzes the reduction of oxygen to water. Electrons originating from reduced cytochrome c in the intermembrane space (IMS) are transferred via the dinuclear copper A center (CU(A)) of subunit 2 and heme A of subunit 1 to the active site in subunit 1, a binuclear center (BNC) formed by heme A3 and copper B (CU(B)). The BNC reduces molecular oxygen to 2 water molecules using 4 electrons from cytochrome c in the IMS and 4 protons from the mitochondrial matrix. The chain is Cytochrome c oxidase subunit 2 (MT-CO2) from Struthio camelus (Common ostrich).